The chain runs to 578 residues: CTP synthase 2 (578 aa).

The region spanning 305 to 564 (KIALVGKYTN…VAAASGTLGE (260 aa)) is the Glutamine amidotransferase type-1 domain. Catalysis depends on for GATase activity residues cysteine 404, histidine 537, and glutamate 539.

The protein belongs to the CTP synthase family. As to quaternary structure, homodimer. Oligomerizes to a tetramer in the presence of its substrates UTP and ATP. Mg(2+) is required as a cofactor.

The protein localises to the cytoplasm. It carries out the reaction UTP + L-glutamine + ATP + H2O = CTP + L-glutamate + ADP + phosphate + 2 H(+). Its pathway is pyrimidine metabolism; CTP biosynthesis via de novo pathway; CTP from UDP: step 2/2. With respect to regulation, activated by GTP. Subject to allosteric product inhibition by CTP. Inhibited by p-chloromercuriphenylsulfonic acid, N-ethylmaleimide and cyclopentenylcytosine (CPEC). Catalyzes the ATP-dependent amination of UTP to CTP with either L-glutamine or ammonia as the source of nitrogen. Plays an important role in the regulation of phospholipid synthesis. The protein is CTP synthase 2 (URA8) of Saccharomyces cerevisiae (strain ATCC 204508 / S288c) (Baker's yeast).